Here is a 62-residue protein sequence, read N- to C-terminus: Large ribosomal subunit protein bL28 (62 aa).

Positions 1–26 (MARKCYVTGKSPKSGNNRSHALNKTK) are disordered. Residues 11-20 (SPKSGNNRSH) show a composition bias toward polar residues.

Belongs to the bacterial ribosomal protein bL28 family.

This Exiguobacterium sp. (strain ATCC BAA-1283 / AT1b) protein is Large ribosomal subunit protein bL28.